Here is a 306-residue protein sequence, read N- to C-terminus: D-alanine--D-alanine ligase (306 aa).

The ATP-grasp domain maps to Lys101 to Met303. Residue Val134–Thr189 coordinates ATP. Positions 257, 270, and 272 each coordinate Mg(2+).

Belongs to the D-alanine--D-alanine ligase family. Requires Mg(2+) as cofactor. Mn(2+) serves as cofactor.

The protein resides in the cytoplasm. The enzyme catalyses 2 D-alanine + ATP = D-alanyl-D-alanine + ADP + phosphate + H(+). It participates in cell wall biogenesis; peptidoglycan biosynthesis. In terms of biological role, cell wall formation. The sequence is that of D-alanine--D-alanine ligase from Yersinia pseudotuberculosis serotype O:1b (strain IP 31758).